A 968-amino-acid chain; its full sequence is RNA polymerase-associated protein RapA (968 aa).

A Helicase ATP-binding domain is found at 164–334 (DVGRRHAPRV…FARLRLLDPN (171 aa)). 177–184 (DEVGLGKT) is a binding site for ATP. The DEAH box signature appears at 280–283 (DEAH). A Helicase C-terminal domain is found at 490–662 (RVEWLMGYLT…YLAAPENTEG (173 aa)).

The protein belongs to the SNF2/RAD54 helicase family. RapA subfamily. As to quaternary structure, interacts with the RNAP. Has a higher affinity for the core RNAP than for the holoenzyme. Its ATPase activity is stimulated by binding to RNAP.

Functionally, transcription regulator that activates transcription by stimulating RNA polymerase (RNAP) recycling in case of stress conditions such as supercoiled DNA or high salt concentrations. Probably acts by releasing the RNAP, when it is trapped or immobilized on tightly supercoiled DNA. Does not activate transcription on linear DNA. Probably not involved in DNA repair. The protein is RNA polymerase-associated protein RapA of Cronobacter sakazakii (strain ATCC BAA-894) (Enterobacter sakazakii).